The chain runs to 89 residues: MSLDKGTKEEITKKFQLHEKDTGSADVQIAILTEHIAELKEHLKRSPKDQNSRLALLKLVGQRRKLLEYLNSTDTERYKNLITRLNLRK.

This sequence belongs to the universal ribosomal protein uS15 family. As to quaternary structure, part of the 30S ribosomal subunit. Forms a bridge to the 50S subunit in the 70S ribosome, contacting the 23S rRNA.

One of the primary rRNA binding proteins, it binds directly to 16S rRNA where it helps nucleate assembly of the platform of the 30S subunit by binding and bridging several RNA helices of the 16S rRNA. In terms of biological role, forms an intersubunit bridge (bridge B4) with the 23S rRNA of the 50S subunit in the ribosome. In Chlamydia pneumoniae (Chlamydophila pneumoniae), this protein is Small ribosomal subunit protein uS15.